A 389-amino-acid polypeptide reads, in one-letter code: Succinate--CoA ligase [ADP-forming] subunit beta (389 aa).

Residues 9–244 (KQLFADYGLP…PSQEDERERR (236 aa)) enclose the ATP-grasp domain. ATP contacts are provided by residues lysine 46, 53–55 (GRG), glutamate 99, threonine 102, and glutamate 107. Positions 199 and 213 each coordinate Mg(2+). Substrate is bound by residues asparagine 264 and 321-323 (GIV).

It belongs to the succinate/malate CoA ligase beta subunit family. In terms of assembly, heterotetramer of two alpha and two beta subunits. The cofactor is Mg(2+).

The catalysed reaction is succinate + ATP + CoA = succinyl-CoA + ADP + phosphate. It carries out the reaction GTP + succinate + CoA = succinyl-CoA + GDP + phosphate. The protein operates within carbohydrate metabolism; tricarboxylic acid cycle; succinate from succinyl-CoA (ligase route): step 1/1. Succinyl-CoA synthetase functions in the citric acid cycle (TCA), coupling the hydrolysis of succinyl-CoA to the synthesis of either ATP or GTP and thus represents the only step of substrate-level phosphorylation in the TCA. The beta subunit provides nucleotide specificity of the enzyme and binds the substrate succinate, while the binding sites for coenzyme A and phosphate are found in the alpha subunit. The chain is Succinate--CoA ligase [ADP-forming] subunit beta from Alcanivorax borkumensis (strain ATCC 700651 / DSM 11573 / NCIMB 13689 / SK2).